A 236-amino-acid polypeptide reads, in one-letter code: Uridylate kinase (236 aa).

ATP is bound at residue 10–13 (KLSG). UMP is bound at residue Gly-52. The ATP site is built by Gly-53 and Arg-57. UMP contacts are provided by residues Asp-72 and 133 to 140 (TGNPFFTT). ATP contacts are provided by Thr-160, Tyr-166, and Asp-169.

The protein belongs to the UMP kinase family. In terms of assembly, homohexamer.

It is found in the cytoplasm. The catalysed reaction is UMP + ATP = UDP + ADP. It participates in pyrimidine metabolism; CTP biosynthesis via de novo pathway; UDP from UMP (UMPK route): step 1/1. Its activity is regulated as follows. Inhibited by UTP. Its function is as follows. Catalyzes the reversible phosphorylation of UMP to UDP. The protein is Uridylate kinase of Bacteroides fragilis (strain ATCC 25285 / DSM 2151 / CCUG 4856 / JCM 11019 / LMG 10263 / NCTC 9343 / Onslow / VPI 2553 / EN-2).